The sequence spans 322 residues: Beta-carotene 3-hydroxylase, chloroplastic (322 aa).

A chloroplast-targeting transit peptide spans 1–68 (TFHKPVSGAS…AQRCSLVRLR (68 aa)). Transmembrane regions (helical) follow at residues 118 to 138 (QAAA…ATYL) and 149 to 169 (AVPW…ALGM). The Fatty acid hydroxylase domain maps to 164-286 (GGALGMEMYA…AHQLHHSGKY (123 aa)). The Histidine box-1 motif lies at 177–182 (HKAIWH). The Histidine box-2 signature appears at 191 to 195 (HKSHH). The next 2 helical transmembrane spans lie at 207–227 (LFAI…FWLP) and 231–251 (GAAC…YMFV). The Histidine box-3 signature appears at 252-257 (HDGLVH). The Histidine box-4 signature appears at 278–282 (HQLHH).

It belongs to the sterol desaturase family.

It localises to the plastid. The protein localises to the chloroplast membrane. It carries out the reaction all-trans-beta-carotene + 4 reduced [2Fe-2S]-[ferredoxin] + 2 O2 + 4 H(+) = all-trans-zeaxanthin + 4 oxidized [2Fe-2S]-[ferredoxin] + 2 H2O. Its function is as follows. Nonheme diiron monooxygenase involved in the biosynthesis of astaxanthin. Hydroxylates beta-ring of beta-carotene and catalyzes the conversion of canthaxanthin to astaxanthin. Uses ferredoxin as an electron donor. The polypeptide is Beta-carotene 3-hydroxylase, chloroplastic (CRTZ) (Haematococcus lacustris (Green alga)).